The sequence spans 145 residues: Large ribosomal subunit protein uL16 (145 aa).

The span at 76 to 95 (PKTKTPAETRMGKGKGEPEH) shows a compositional bias: basic and acidic residues. A disordered region spans residues 76-97 (PKTKTPAETRMGKGKGEPEHFV).

This sequence belongs to the universal ribosomal protein uL16 family. In terms of assembly, part of the 50S ribosomal subunit.

Its function is as follows. Binds 23S rRNA and is also seen to make contacts with the A and possibly P site tRNAs. The sequence is that of Large ribosomal subunit protein uL16 from Salinibacter ruber (strain DSM 13855 / M31).